The chain runs to 602 residues: Replication protein E1 (602 aa).

The Nuclear localization signal signature appears at 74–76; sequence KRK. Phosphoserine; by host is present on residues Ser-80, Ser-84, and Ser-95. A DNA-binding region region spans residues 138–306; that stretch reads QQSVSDTPVT…TNVNHQMLQE (169 aa). The SF3 helicase domain maps to 405-555; the sequence is VEFIPFMVKL…LPIRNGTPVY (151 aa). Residue 431 to 438 coordinates ATP; that stretch reads GPPNSGKS. Lys-512 participates in a covalent cross-link: Glycyl lysine isopeptide (Lys-Gly) (interchain with G-Cter in SUMO). The segment at 577 to 602 is disordered; the sequence is DPEDEGDDGGSQPALRLHTGGTSQSL.

This sequence belongs to the papillomaviridae E1 protein family. Can form hexamers. Interacts with E2 protein; this interaction increases E1 DNA binding specificity. Interacts with host DNA polymerase subunit POLA2. Interacts with host single stranded DNA-binding protein RPA1. Interacts with host TOP1; this interaction stimulates the enzymatic activity of TOP1. In terms of processing, phosphorylated. Sumoylated.

The protein resides in the host nucleus. It carries out the reaction Couples ATP hydrolysis with the unwinding of duplex DNA by translocating in the 3'-5' direction.. The enzyme catalyses ATP + H2O = ADP + phosphate + H(+). Functionally, ATP-dependent DNA 3'-5' helicase required for initiation of viral DNA replication. It forms a complex with the viral E2 protein. The E1-E2 complex binds to the replication origin which contains binding sites for both proteins. During the initial step, a dimer of E1 interacts with a dimer of protein E2 leading to a complex that binds the viral origin of replication with high specificity. Then, a second dimer of E1 displaces the E2 dimer in an ATP-dependent manner to form the E1 tetramer. Following this, two E1 monomers are added to each half of the site, which results in the formation of two E1 trimers on the viral ori. Subsequently, two hexamers will be created. The double hexamer acts as a bi-directional helicase machinery and unwinds the viral DNA and then recruits the host DNA polymerase to start replication. This chain is Replication protein E1, found in Sylvilagus floridanus (Cottontail rabbit).